Reading from the N-terminus, the 221-residue chain is 5-methylthioribulose-1-phosphate/5-deoxyribulose-1-phosphate aldolase (221 aa).

Glutamate 75 functions as the Proton donor/acceptor in the catalytic mechanism. The Co(2+) site is built by glutamate 75, histidine 94, histidine 96, and histidine 157.

This sequence belongs to the aldolase class II family. Co(2+) is required as a cofactor.

The catalysed reaction is 5-(methylsulfanyl)-D-ribulose 1-phosphate = 2-(methylsulfanyl)acetaldehyde + dihydroxyacetone phosphate. It catalyses the reaction 5-deoxy-D-ribulose 1-phosphate = dihydroxyacetone phosphate + acetaldehyde. It functions in the pathway amino-acid biosynthesis; L-methionine biosynthesis via salvage pathway. Functionally, uses 5-methylthioribulose-1-phosphate to yield 2-(methylthio)acetaldehyde and dihydroxyacetone phosphate. Can also use 5-deoxyribulose 1-phosphate to yield acetaldehyde and dihydroxyacetone phosphate. Part of a bifunctional DHAP-shunt salvage pathway for SAM by-products. The sequence is that of 5-methylthioribulose-1-phosphate/5-deoxyribulose-1-phosphate aldolase from Rhodospirillum rubrum (strain ATCC 11170 / ATH 1.1.1 / DSM 467 / LMG 4362 / NCIMB 8255 / S1).